The chain runs to 418 residues: Sialidase-3 (418 aa).

An FRIP motif motif is present at residues 24-27 (YRIP). Positions 25 and 45 each coordinate substrate. The active-site Proton acceptor is Asp50. One copy of the BNR 1 repeat lies at 129 to 140 (LCSEDAGCSWGE). Tyr179 and Tyr181 together coordinate substrate. The stretch at 203 to 214 (SDDFGVTWHHGK) is one BNR 2 repeat. Glu223 and Arg243 together coordinate substrate. A BNR 3 repeat occupies 254-265 (STDSGGCFQKPT). Ser312 is modified (phosphoserine). Arg339 serves as a coordination point for substrate. Tyr369 serves as the catalytic Nucleophile. Glu386 is an active-site residue.

Belongs to the glycosyl hydrolase 33 family. Interacts with CAV1; this interaction enhances NEU3 sialidase activity within caveola. Interacts with EGFR; this interaction mediates desialylation of EGFR and enhances downstream signaling. Post-translationally, palmitoylated; may regulate intracellular trafficking and anchorage to plasma membrane and endomembranes. As to expression, expressed in heart, brain and cerebral cortex.

It is found in the cell membrane. The protein localises to the membrane. The protein resides in the caveola. Its subcellular location is the early endosome membrane. It localises to the recycling endosome membrane. It is found in the lysosome membrane. The catalysed reaction is Hydrolysis of alpha-(2-&gt;3)-, alpha-(2-&gt;6)-, alpha-(2-&gt;8)- glycosidic linkages of terminal sialic acid residues in oligosaccharides, glycoproteins, glycolipids, colominic acid and synthetic substrates.. The enzyme catalyses a ganglioside GD1a + H2O = a ganglioside GM1 + N-acetylneuraminate. It catalyses the reaction a ganglioside GD1a (d18:1(4E)) + H2O = a ganglioside GM1 (d18:1(4E)) + N-acetylneuraminate. It carries out the reaction a ganglioside GD1b + H2O = a ganglioside GM1 + N-acetylneuraminate. The catalysed reaction is a ganglioside GD1b (d18:1(4E)) + H2O = a ganglioside GM1 (d18:1(4E)) + N-acetylneuraminate. The enzyme catalyses a ganglioside GD3 + H2O = a ganglioside GM3 + N-acetylneuraminate. It catalyses the reaction a ganglioside GD3 (d18:1(4E)) + H2O = a ganglioside GM3 (d18:1(4E)) + N-acetylneuraminate. It carries out the reaction a ganglioside GM3 + H2O = a beta-D-galactosyl-(1-&gt;4)-beta-D-glucosyl-(1&lt;-&gt;1)-ceramide + N-acetylneuraminate. The catalysed reaction is a ganglioside GM1 + H2O = a ganglioside GA1 + N-acetylneuraminate. The enzyme catalyses a ganglioside GM1 (d18:1(4E)) + H2O = a ganglioside GA1 (d18:1(4E)) + N-acetylneuraminate. It catalyses the reaction a ganglioside GM2 (d18:1(4E)) + H2O = a ganglioside GA2 (d18:1(4E)) + N-acetylneuraminate. It carries out the reaction a ganglioside GM3 (d18:1(4E)) + H2O = a beta-D-Gal-(1-&gt;4)-beta-D-Glc-(1&lt;-&gt;1)-Cer(d18:1(4E)) + N-acetylneuraminate. The catalysed reaction is a ganglioside GT1b + H2O = a ganglioside GD1b + N-acetylneuraminate. In terms of biological role, exo-alpha-sialidase that catalyzes the hydrolytic cleavage of the terminal sialic acid (N-acetylneuraminic acid, Neu5Ac) of a glycan moiety in the catabolism of glycolipids, glycoproteins and oligosacharides. Displays high catalytic efficiency for gangliosides including alpha-(2-&gt;3)-sialylated GD1a and GM3 and alpha-(2-&gt;8)-sialylated GD3. Plays a role in the regulation of transmembrane signaling through the modulation of ganglioside content of the lipid bilayer and by direct interaction with signaling receptors, such as EGFR. Desialylates EGFR and activates downstream signaling in proliferating cells. Contributes to clathrin-mediated endocytosis by regulating sorting of endocytosed receptors to early and recycling endosomes. This is Sialidase-3 (Neu3) from Mus musculus (Mouse).